Reading from the N-terminus, the 201-residue chain is Recombination protein RecR (201 aa).

The C4-type zinc finger occupies 60-75 (CSRCFHFTDAEECSIC). Residues 83 to 178 (GEICVVETTA…RVSRIAYGIP (96 aa)) enclose the Toprim domain.

It belongs to the RecR family.

Its function is as follows. May play a role in DNA repair. It seems to be involved in an RecBC-independent recombinational process of DNA repair. It may act with RecF and RecO. This chain is Recombination protein RecR, found in Syntrophobacter fumaroxidans (strain DSM 10017 / MPOB).